The chain runs to 52 residues: Repressor-like protein SSo7c3 (52 aa).

Positions 4–51 constitute a SpoVT-AbrB domain; the sequence is EEVVKVSRNYQVTIPAKVRQKFPVKEGDLVKVIYDENGGVVKIQILDS.

The chain is Repressor-like protein SSo7c3 from Saccharolobus solfataricus (strain ATCC 35092 / DSM 1617 / JCM 11322 / P2) (Sulfolobus solfataricus).